A 135-amino-acid chain; its full sequence is MIIGIGSDFSDARRIARSIERFGDRFLDRVFTPGERRKADQRKLRAETYAKRFAAKEACSKALGTGLSHGVFWRDMEVVNLPSGQPTLMLTGGAARRLAALVPDGYEPHIHLSLTDEGPLTAAYVIISAVPKTGV.

2 residues coordinate Mg(2+): Asp-8 and Glu-57.

The protein belongs to the P-Pant transferase superfamily. AcpS family. Mg(2+) serves as cofactor.

It localises to the cytoplasm. It catalyses the reaction apo-[ACP] + CoA = holo-[ACP] + adenosine 3',5'-bisphosphate + H(+). Its function is as follows. Transfers the 4'-phosphopantetheine moiety from coenzyme A to a Ser of acyl-carrier-protein. This is Holo-[acyl-carrier-protein] synthase from Xanthobacter autotrophicus (strain ATCC BAA-1158 / Py2).